Reading from the N-terminus, the 249-residue chain is Chitooligosaccharide deacetylase (249 aa).

The Mg(2+) site is built by histidine 61 and histidine 125.

The protein belongs to the YdjC deacetylase family. ChbG subfamily. Homodimer. It depends on Mg(2+) as a cofactor.

The protein localises to the cytoplasm. The catalysed reaction is N,N'-diacetylchitobiose + H2O = N-acetyl-beta-D-glucosaminyl-(1-&gt;4)-D-glucosamine + acetate. It carries out the reaction diacetylchitobiose-6'-phosphate + H2O = N'-monoacetylchitobiose-6'-phosphate + acetate. Its pathway is glycan degradation; chitin degradation. Its function is as follows. Involved in the degradation of chitin. ChbG is essential for growth on the acetylated chitooligosaccharides chitobiose and chitotriose but is dispensable for growth on cellobiose and chitosan dimer, the deacetylated form of chitobiose. Deacetylation of chitobiose-6-P and chitotriose-6-P is necessary for both the activation of the chb promoter by the regulatory protein ChbR and the hydrolysis of phosphorylated beta-glucosides by the phospho-beta-glucosidase ChbF. Catalyzes the removal of only one acetyl group from chitobiose-6-P to yield monoacetylchitobiose-6-P, the inducer of ChbR and the substrate of ChbF. The polypeptide is Chitooligosaccharide deacetylase (Escherichia coli O9:H4 (strain HS)).